The following is a 283-amino-acid chain: Phenylethanolamine N-methyltransferase (283 aa).

Phosphoserine is present on serine 7. Residues tyrosine 35, tyrosine 40, 79-80, tyrosine 85, aspartate 101, asparagine 106, 158-159, and alanine 181 each bind S-adenosyl-L-methionine; these read GS and DV. Octopamine is bound by residues glutamate 219 and aspartate 267.

The protein belongs to the class I-like SAM-binding methyltransferase superfamily. NNMT/PNMT/TEMT family.

The catalysed reaction is phenylethanolamine + S-adenosyl-L-methionine = N-methylphenylethanolamine + S-adenosyl-L-homocysteine + H(+). It carries out the reaction (R)-noradrenaline + S-adenosyl-L-methionine = (R)-adrenaline + S-adenosyl-L-homocysteine + H(+). The enzyme catalyses (R)-normetanephrine + S-adenosyl-L-methionine = (R)-metanephrine + S-adenosyl-L-homocysteine + H(+). It catalyses the reaction (R)-octopamine + S-adenosyl-L-methionine = (R)-synephrine + S-adenosyl-L-homocysteine + H(+). Its pathway is catecholamine biosynthesis; (R)-adrenaline biosynthesis; (R)-adrenaline from (R)-noradrenaline: step 1/1. Functionally, catalyzes the transmethylation of nonepinephrine (noradrenaline) to form epinephrine (adrenaline), using S-adenosyl-L-methionine as the methyl donor. Other substrates include phenylethanolamine, octopamine and normetanephrine. The sequence is that of Phenylethanolamine N-methyltransferase (PNMT) from Sus scrofa (Pig).